A 174-amino-acid chain; its full sequence is FMN reductase (NADH) SmoA (174 aa).

It belongs to the non-flavoprotein flavin reductase family.

It carries out the reaction FMNH2 + NAD(+) = FMN + NADH + 2 H(+). Its function is as follows. Part of the sulfoquinovose monooxygenase (sulfo-SMO) pathway, a D-sulfoquinovose degradation pathway that enables the complete utilization of all carbons within sulfoquinovose (SQ) with concomitant production of inorganic sulfite. Catalyzes the NADH-dependent reduction of FMN. FMNH(2) is then transferred to the sulfoquinovose monooxygenase SmoC. This Agrobacterium fabrum (strain C58 / ATCC 33970) (Agrobacterium tumefaciens (strain C58)) protein is FMN reductase (NADH) SmoA.